Reading from the N-terminus, the 320-residue chain is Glucokinase (320 aa).

Residue 12–17 (GDIGGT) coordinates ATP.

This sequence belongs to the bacterial glucokinase family.

Its subcellular location is the cytoplasm. It carries out the reaction D-glucose + ATP = D-glucose 6-phosphate + ADP + H(+). This Nitrobacter hamburgensis (strain DSM 10229 / NCIMB 13809 / X14) protein is Glucokinase.